Consider the following 407-residue polypeptide: Phosphonoacetate hydrolase (407 aa).

Zn(2+) contacts are provided by D25, T64, D202, H206, D241, H242, and H368. Residues T64 and D202 each contribute to the substrate site. 2 residues coordinate substrate: H242 and H368.

The protein belongs to the alkaline phosphatase family. PhnA subfamily. Homodimer. Requires Zn(2+) as cofactor.

It carries out the reaction phosphonoacetate + H2O = acetate + phosphate + H(+). Its function is as follows. Specifically hydrolyzes phosphonoacetate. Does not have activity on other organophosphonates or acetates. The chain is Phosphonoacetate hydrolase from Pseudomonas putida (Arthrobacter siderocapsulatus).